Reading from the N-terminus, the 888-residue chain is Pyruvate dehydrogenase E1 component (888 aa).

Homodimer. Part of the PDH complex, consisting of multiple copies of pyruvate dehydrogenase (E1), dihydrolipoamide acetyltransferase (E2) and lipoamide dehydrogenase (E3). The cofactor is thiamine diphosphate.

The enzyme catalyses N(6)-[(R)-lipoyl]-L-lysyl-[protein] + pyruvate + H(+) = N(6)-[(R)-S(8)-acetyldihydrolipoyl]-L-lysyl-[protein] + CO2. Component of the pyruvate dehydrogenase (PDH) complex, that catalyzes the overall conversion of pyruvate to acetyl-CoA and CO(2). This is Pyruvate dehydrogenase E1 component (aceE) from Buchnera aphidicola subsp. Schizaphis graminum (strain Sg).